A 105-amino-acid polypeptide reads, in one-letter code: Large ribosomal subunit protein uL24 (105 aa).

This sequence belongs to the universal ribosomal protein uL24 family. As to quaternary structure, part of the 50S ribosomal subunit.

Its function is as follows. One of two assembly initiator proteins, it binds directly to the 5'-end of the 23S rRNA, where it nucleates assembly of the 50S subunit. Functionally, one of the proteins that surrounds the polypeptide exit tunnel on the outside of the subunit. The sequence is that of Large ribosomal subunit protein uL24 from Nitrosospira multiformis (strain ATCC 25196 / NCIMB 11849 / C 71).